The sequence spans 61 residues: Small ribosomal subunit protein uS14 (61 aa).

4 residues coordinate Zn(2+): Cys24, Cys27, Cys40, and Cys43.

The protein belongs to the universal ribosomal protein uS14 family. Zinc-binding uS14 subfamily. As to quaternary structure, part of the 30S ribosomal subunit. Contacts proteins S3 and S10. The cofactor is Zn(2+).

Binds 16S rRNA, required for the assembly of 30S particles and may also be responsible for determining the conformation of the 16S rRNA at the A site. The sequence is that of Small ribosomal subunit protein uS14 from Desulfatibacillum aliphaticivorans.